The primary structure comprises 262 residues: Phosphatidylglycerol--prolipoprotein diacylglyceryl transferase 1 (262 aa).

4 helical membrane passes run 15–35 (WYGIIIALGILIAMTLVSINA), 40–60 (LNFDVILDLFLWCFPFAIIGA), 83–103 (QGGLAIHGGIIGAFLTAFIYC), and 108–128 (VDFLAYADIVAPAFILAQGIG). R129 provides a ligand contact to a 1,2-diacyl-sn-glycero-3-phospho-(1'-sn-glycerol). Transmembrane regions (helical) follow at residues 169–189 (TFLYESIWDIFVAILLMIILY), 197–217 (GVVISAYISLYSLGRFFIEGL), and 229–249 (VAQLVSLLGIIIGIVAIIIIV).

This sequence belongs to the Lgt family.

Its subcellular location is the cell membrane. It carries out the reaction L-cysteinyl-[prolipoprotein] + a 1,2-diacyl-sn-glycero-3-phospho-(1'-sn-glycerol) = an S-1,2-diacyl-sn-glyceryl-L-cysteinyl-[prolipoprotein] + sn-glycerol 1-phosphate + H(+). It participates in protein modification; lipoprotein biosynthesis (diacylglyceryl transfer). Its function is as follows. Catalyzes the transfer of the diacylglyceryl group from phosphatidylglycerol to the sulfhydryl group of the N-terminal cysteine of a prolipoprotein, the first step in the formation of mature lipoproteins. The protein is Phosphatidylglycerol--prolipoprotein diacylglyceryl transferase 1 of Clostridium perfringens (strain 13 / Type A).